The sequence spans 2412 residues: Centrosomal protein of 295 kDa (2412 aa).

The tract at residues 1 to 540 (MKRKGMNTKL…KQADQPEVCC (540 aa)) is necessary for centriole targeting and microtubule association. Serine 13 carries the phosphoserine modification. Coiled-coil stretches lie at residues 63 to 84 (AEELRAKWEEAQSQKIQNLEKL), 114 to 134 (AERKRKAEVRHKEALKVQKNQ), 209 to 273 (DAHL…DLAR), 489 to 535 (RRKQ…QADQ), and 563 to 592 (HQLLQQNRLHKETVETARKRLLEYQTVLKE). Disordered regions lie at residues 600 to 641 (SALV…YQPV) and 739 to 762 (LDSQQISSEDSENISSKPSEPSPF). The residue at position 634 (serine 634) is a Phosphoserine. Residues 739 to 757 (LDSQQISSEDSENISSKPS) are compositionally biased toward polar residues. Residues 811–841 (AQQGDLRFLQEQLELQKKVLQARQEAREKLL) adopt a coiled-coil conformation. Disordered regions lie at residues 871 to 891 (SASAESGNFQTSSTKSDATVS), 973 to 1005 (DTQSKKIQKQPLPANKKGLLPSQSEVSKAQDGS), 1158 to 1178 (LSSPSQVTDWGTSRGSVSVRS), and 1216 to 1240 (WVDTEKESFQSSPLTPENPSSQQTG). Polar residues-rich tracts occupy residues 993 to 1005 (PSQSEVSKAQDGS), 1158 to 1176 (LSSPSQVTDWGTSRGSVSV), and 1224 to 1240 (FQSSPLTPENPSSQQTG). Coiled-coil stretches lie at residues 1300-1327 (QQDSLKALQEQLATQREAIIHSRQEAHE) and 1448-1493 (QHDD…SKQI). Serine 1573 carries the post-translational modification Phosphoserine. 4 disordered regions span residues 1820–1895 (LAHD…LSSV), 1916–1937 (ESFSEQTEHLEQESTNKQEETD), 2028–2048 (DLSSPGTSQEDSDFYQSSESS), and 2089–2111 (TEGSEQSFQQLRPEFSSQESQHA). The span at 1836–1868 (SKSHDDNAEAVKVKKSDVEDHAVLSHAVSKEEA) shows a compositional bias: basic and acidic residues. The span at 1885–1895 (QEISQEPLSSV) shows a compositional bias: polar residues. The span at 1921–1935 (QTEHLEQESTNKQEE) shows a compositional bias: basic and acidic residues. Polar residues predominate over residues 2089 to 2108 (TEGSEQSFQQLRPEFSSQES). Residues 2367–2412 (SLQEAFMTRQTLTERSYQRQREIWNKTRLPQTKVSKEKLPTGCTGS) are ALMS motif.

Interacts (via ALMS motif) with microtubules; this interaction is direct.

It localises to the cytoplasm. The protein localises to the cytoskeleton. Its subcellular location is the microtubule organizing center. The protein resides in the centrosome. It is found in the centriole. It localises to the spindle. In terms of biological role, centriole-enriched microtubule-binding protein involved in centriole biogenesis. Essential for the generation of the distal portion of new-born centrioles in a CPAP- and CEP120-mediated elongation dependent manner during the cell cycle S/G2 phase after formation of the initiating cartwheel structure. Required for the recruitment of centriolar proteins, such as POC1B, POC5 and CEP135, into the distal portion of centrioles. Also required for centriole-to-centrosome conversion during mitotic progression, but is dispensable for cartwheel removal or centriole disengagement. Binds to and stabilizes centriolar microtubule. May be involved in ciliogenesis. The protein is Centrosomal protein of 295 kDa of Mus musculus (Mouse).